A 265-amino-acid polypeptide reads, in one-letter code: 3-methyl-2-oxobutanoate hydroxymethyltransferase (265 aa).

Mg(2+) contacts are provided by D45 and D84. Residues 45-46 (DS), D84, and K112 each bind 3-methyl-2-oxobutanoate. Position 114 (E114) interacts with Mg(2+). The Proton acceptor role is filled by E181.

The protein belongs to the PanB family. As to quaternary structure, homodecamer; pentamer of dimers. Mg(2+) is required as a cofactor.

The protein localises to the cytoplasm. The catalysed reaction is 3-methyl-2-oxobutanoate + (6R)-5,10-methylene-5,6,7,8-tetrahydrofolate + H2O = 2-dehydropantoate + (6S)-5,6,7,8-tetrahydrofolate. It participates in cofactor biosynthesis; (R)-pantothenate biosynthesis; (R)-pantoate from 3-methyl-2-oxobutanoate: step 1/2. Its function is as follows. Catalyzes the reversible reaction in which hydroxymethyl group from 5,10-methylenetetrahydrofolate is transferred onto alpha-ketoisovalerate to form ketopantoate. This Pseudoalteromonas atlantica (strain T6c / ATCC BAA-1087) protein is 3-methyl-2-oxobutanoate hydroxymethyltransferase.